Here is a 147-residue protein sequence, read N- to C-terminus: MVHWTAEEKAVINSVWQKVDVEQDGHEALTRLFIVYPWTQRYFSTFGDLSSPAAIAGNPKVHAHGKKILGAIDNAIHNLDDVKGTLHDLSEEHANELHVDPENFRRLGEVLIVVLGAKLGKAFSPQVQHVWEKFIAVLVDALSHSYH.

The 145-residue stretch at 3–147 (HWTAEEKAVI…LVDALSHSYH (145 aa)) folds into the Globin domain. Histidine 64 and histidine 93 together coordinate heme b.

This sequence belongs to the globin family. In terms of assembly, heterotetramer of two alpha chains and two beta chains. In terms of tissue distribution, red blood cells.

In terms of biological role, this is a tadpole (larval) beta chain. The polypeptide is Hemoglobin subunit beta-3 (Aquarana catesbeiana (American bullfrog)).